We begin with the raw amino-acid sequence, 970 residues long: Sodium/calcium exchanger 1 (970 aa).

An N-terminal signal peptide occupies residues 1 to 32; the sequence is MLRLSLSPTYSLGFHLLAMMTLLISHVDHITA. The Extracellular portion of the chain corresponds to 33-71; that stretch reads ETEMVEEGNETGECTGSYYCKKGVILPIWEPQDPSFGDK. The N-linked (GlcNAc...) asparagine glycan is linked to N41. The helical transmembrane segment at 72–92 threads the bilayer; that stretch reads IARATVYFVAMVYMFLGVSII. Residues 93–133 lie on the Cytoplasmic side of the membrane; it reads ADRFMSSIEVITSQEKEITIKKPNGETTKTTVRIWNETVSN. The helical transmembrane segment at 134–154 threads the bilayer; it reads LTLMALGSSAPEILLSVIEVC. An Alpha-1 repeat occupies 138-178; the sequence is ALGSSAPEILLSVIEVCGHNFTAGDLGPSTIVGSAAFNMFI. Topologically, residues 155–167 are extracellular; the sequence is GHNFTAGDLGPST. N157 is a glycosylation site (N-linked (GlcNAc...) asparagine). Residues 168 to 188 form a helical membrane-spanning segment; it reads IVGSAAFNMFIIIALCVYVVP. The Cytoplasmic portion of the chain corresponds to 189-201; the sequence is DGETRKIKHLRVF. The chain crosses the membrane as a helical span at residues 202–222; that stretch reads FVTAAWSIFAYTWLYIILSVI. Residues 223–228 lie on the Extracellular side of the membrane; that stretch reads SPGVVE. Residues 229-249 form a helical membrane-spanning segment; sequence VWEGLLTFFFFPICVVFAWVA. The Cytoplasmic segment spans residues 250-797; it reads DRRLLFYKYV…FVPPTEYWNG (548 aa). The putative calmodulin-binding region stretch occupies residues 251–270; that stretch reads RRLLFYKYVYKRYRAGKQRG. Phosphoserine occurs at positions 282 and 389. 2 consecutive Calx-beta domains span residues 393–493 and 524–624; these read VNTE…VHLS and ATVT…LEIG. Residues E417, D453, D478, D479, I481, E483, E486, D530, D531, D532, E548, D584, D610, E611, E612, and E715 each coordinate Ca(2+). Residues 798 to 818 form a helical membrane-spanning segment; the sequence is WACFIVSILMIGLLTAFIGDL. The Extracellular portion of the chain corresponds to 819-821; it reads ASH. Residues 822–842 traverse the membrane as a helical segment; sequence FGCTIGLKDSVTAVVFVALGT. The stretch at 839 to 875 is one Alpha-2 repeat; it reads ALGTSVPDTFASKVAATQDQYADASIGNVTGSNAVNV. Topologically, residues 843-871 are cytoplasmic; that stretch reads SVPDTFASKVAATQDQYADASIGNVTGSN. A helical transmembrane segment spans residues 872–892; sequence AVNVFLGIGVAWSIAAIYHAA. Residues 893–903 are Extracellular-facing; the sequence is NGEQFKVSPGT. Residues 904 to 924 form a helical membrane-spanning segment; sequence LAFSVTLFTIFAFINVGVLLY. Topologically, residues 925 to 941 are cytoplasmic; sequence RRRPEIGGELGGPRTAK. Residues 942 to 962 form a helical membrane-spanning segment; that stretch reads LLTSCLFVLLWLLYIFFSSLE. Topologically, residues 963 to 970 are extracellular; sequence AYCHIKGF.

It belongs to the Ca(2+):cation antiporter (CaCA) (TC 2.A.19) family. SLC8 subfamily.

The protein resides in the cell membrane. It catalyses the reaction Ca(2+)(in) + 3 Na(+)(out) = Ca(2+)(out) + 3 Na(+)(in). Activated by micromolar levels of Ca(2+). Mediates the exchange of one Ca(2+) ion against three to four Na(+) ions across the cell membrane, and thereby contributes to the regulation of cytoplasmic Ca(2+) levels and Ca(2+)-dependent cellular processes. Contributes to Ca(2+) transport during excitation-contraction coupling in muscle. In a first phase, voltage-gated channels mediate the rapid increase of cytoplasmic Ca(2+) levels due to release of Ca(2+) stores from the endoplasmic reticulum. SLC8A1 mediates the export of Ca(2+) from the cell during the next phase, so that cytoplasmic Ca(2+) levels rapidly return to baseline. Required for normal embryonic heart development and the onset of heart contractions. In Cavia porcellus (Guinea pig), this protein is Sodium/calcium exchanger 1 (SLC8A1).